Here is a 342-residue protein sequence, read N- to C-terminus: Dihydroorotase (342 aa).

H13 and H15 together coordinate Zn(2+). Residues 15–17 and N41 each bind substrate; that span reads HLR. Residues K98, H135, and H173 each coordinate Zn(2+). Position 98 is an N6-carboxylysine (K98). H135 is a substrate binding site. Residue L218 coordinates substrate. D246 serves as a coordination point for Zn(2+). The active site involves D246. Positions 250 and 262 each coordinate substrate.

Belongs to the metallo-dependent hydrolases superfamily. DHOase family. Class II DHOase subfamily. As to quaternary structure, homodimer. Requires Zn(2+) as cofactor.

The enzyme catalyses (S)-dihydroorotate + H2O = N-carbamoyl-L-aspartate + H(+). It participates in pyrimidine metabolism; UMP biosynthesis via de novo pathway; (S)-dihydroorotate from bicarbonate: step 3/3. Functionally, catalyzes the reversible cyclization of carbamoyl aspartate to dihydroorotate. The polypeptide is Dihydroorotase (Vibrio campbellii (strain ATCC BAA-1116)).